The chain runs to 179 residues: Casparian strip membrane protein 1 (179 aa).

Residues 1 to 17 are Cytoplasmic-facing; it reads MKAGPLQLGVVPPANRA. Residues 18-38 form a helical membrane-spanning segment; it reads IAILDFFLRPIAIVGTLASAI. The Extracellular segment spans residues 39–67; it reads AMATTNQTLPFFSQFIRFRAKFNDLPSFT. The N-linked (GlcNAc...) asparagine glycan is linked to Asn-44. Residues 68 to 88 form a helical membrane-spanning segment; it reads FFVVASSIVSAYLILSLGFSI. Residues 89–100 are Cytoplasmic-facing; it reads LHIAKSNLVNSR. Residues 101 to 121 traverse the membrane as a helical segment; it reads VLLLLLDTAAMGLLMAGSAAA. Topologically, residues 122-154 are extracellular; it reads TAIVQLAHKGNNKVNWFAICQQYNSFCKRVSGS. A helical transmembrane segment spans residues 155 to 175; it reads LIGSYAGVVVLILLILLSGVA. Residues 176-179 lie on the Cytoplasmic side of the membrane; it reads LSRR.

It belongs to the Casparian strip membrane proteins (CASP) family. As to quaternary structure, homodimer and heterodimers.

The protein resides in the cell membrane. Its function is as follows. Regulates membrane-cell wall junctions and localized cell wall deposition. Required for establishment of the Casparian strip membrane domain (CSD) and the subsequent formation of Casparian strips, a cell wall modification of the root endodermis that determines an apoplastic barrier between the intraorganismal apoplasm and the extraorganismal apoplasm and prevents lateral diffusion. This chain is Casparian strip membrane protein 1, found in Lactuca sativa (Garden lettuce).